Here is a 460-residue protein sequence, read N- to C-terminus: Cysteine--tRNA ligase (460 aa).

Position 28 (C28) interacts with Zn(2+). The short motif at 30 to 40 (MTVYDYCHLGH) is the 'HIGH' region element. The Zn(2+) site is built by C209, H234, and E238. Positions 266–270 (KMSKS) match the 'KMSKS' region motif. K269 contributes to the ATP binding site.

Belongs to the class-I aminoacyl-tRNA synthetase family. Monomer. Requires Zn(2+) as cofactor.

The protein resides in the cytoplasm. The catalysed reaction is tRNA(Cys) + L-cysteine + ATP = L-cysteinyl-tRNA(Cys) + AMP + diphosphate. The sequence is that of Cysteine--tRNA ligase from Pseudomonas putida (strain GB-1).